The sequence spans 115 residues: Ribonuclease P protein component (115 aa).

It belongs to the RnpA family. In terms of assembly, consists of a catalytic RNA component (M1 or rnpB) and a protein subunit.

The catalysed reaction is Endonucleolytic cleavage of RNA, removing 5'-extranucleotides from tRNA precursor.. Functionally, RNaseP catalyzes the removal of the 5'-leader sequence from pre-tRNA to produce the mature 5'-terminus. It can also cleave other RNA substrates such as 4.5S RNA. The protein component plays an auxiliary but essential role in vivo by binding to the 5'-leader sequence and broadening the substrate specificity of the ribozyme. This is Ribonuclease P protein component from Bacillus cereus (strain B4264).